A 395-amino-acid polypeptide reads, in one-letter code: NAC domain-containing protein 7 (395 aa).

An NAC domain is found at 7–156 (VPPGFRFHPT…GWVVCRVFKK (150 aa)). The DNA-binding element occupies 107 to 162 (IGMRKTLVFYKGRAPNGQKSDWIMHEYRLETDENGTPQEEGWVVCRVFKKRLAAVR). Polar residues-rich tracts occupy residues 344-362 (AATA…SNAE) and 382-395 (TAST…DLWK). Residues 344–395 (AATASASIQNNAKDTSNAEYQVDEEKDPKRASDMGEEYTASTSSSCQIDLWK) form a disordered region.

It belongs to the plant vascular related NAC-domain protein family. In terms of assembly, interacts with NAC083/VNI2. In terms of tissue distribution, expressed in root, shoot and hypocotyl vascular elements, columella root caps, epidermal and cortex root cells and root-hypocotyl junctions. Observed predominantly in root imature xylem vessels. Present in root developing xylems. Specifically expressed in vessels in the secondary xylem of the root-hypocotyl region, and in vessels but not in interfascicular fibers in stems.

It localises to the nucleus. In terms of biological role, transcription activator that binds to the secondary wall NAC binding element (SNBE), 5'-(T/A)NN(C/T)(T/C/G)TNNNNNNNA(A/C)GN(A/C/T)(A/T)-3', in the promoter of target genes. Involved in xylem formation by promoting the expression of secondary wall-associated transcription factors and of genes involved in secondary wall biosynthesis and programmed cell death, genes driven by the secondary wall NAC binding element (SNBE). Triggers thickening of secondary walls. The chain is NAC domain-containing protein 7 from Arabidopsis thaliana (Mouse-ear cress).